The primary structure comprises 578 residues: Membrane protein insertase YidC (578 aa).

Residues 7-27 (FLAIAISLGILLGFQGLYRHF) traverse the membrane as a helical segment. Positions 35-70 (ARTATNAGQGKPNNTLGAVPTDATASQSPPPKEGAR) are disordered. Residues 37–50 (TATNAGQGKPNNTL) are compositionally biased toward polar residues. 4 helical membrane-spanning segments follow: residues 362-382 (LVGNFGVAILIFTVLVKAAFY), 436-456 (LPMLLQFPIFFSLYKVIFVTI), 491-511 (HISPFLHLGIWPLIMGGTMYL), and 530-550 (FMPIIFTFMLARFPVGLVIYW).

Belongs to the OXA1/ALB3/YidC family. Type 1 subfamily. In terms of assembly, interacts with the Sec translocase complex via SecD. Specifically interacts with transmembrane segments of nascent integral membrane proteins during membrane integration.

The protein resides in the cell inner membrane. Functionally, required for the insertion and/or proper folding and/or complex formation of integral membrane proteins into the membrane. Involved in integration of membrane proteins that insert both dependently and independently of the Sec translocase complex, as well as at least some lipoproteins. Aids folding of multispanning membrane proteins. The protein is Membrane protein insertase YidC of Granulibacter bethesdensis (strain ATCC BAA-1260 / CGDNIH1).